Reading from the N-terminus, the 337-residue chain is Cell-surface associated glycoprotein DFI1 (337 aa).

The Cytoplasmic portion of the chain corresponds to Met-1–Asp-21. Residues Gly-22–Val-42 form a helical membrane-spanning segment. The Extracellular segment spans residues Asn-43–Arg-269. 4 N-linked (GlcNAc...) asparagine glycosylation sites follow: Asn-53, Asn-65, Asn-87, and Asn-100. Low complexity-rich tracts occupy residues Ser-124–Ser-220 and Ser-241–Asp-259. 2 disordered regions span residues Ser-124–Thr-224 and Ser-241–Ser-265. A helical membrane pass occupies residues Ile-270 to Leu-290. The short motif at Gly-273 to Gly-277 is the Glycophorin A element. Topologically, residues Phe-291–Phe-337 are cytoplasmic. Positions Tyr-301 to Leu-314 match the Calmodulin-binding motif.

It belongs to the MID2 like cell wall stress sensor family. Cross-linked to the carbohydrate polymers of the cell wall. Post-translationally, O-glycosylated by MNT1 and MNT2. Also N-glycosylated.

Its subcellular location is the cell membrane. The protein localises to the cell septum. The protein resides in the secreted. It localises to the cell wall. Functionally, cell-surface associated glycoprotein that acts as a plasma membrane receptor-type protein which senses the presence of matrix. Binds to calmodulin in response to environmental conditions and initiates a signaling cascade that activates CEK1, thus promoting invasive filamentation. Involved in the maintenance of the cell wall. In Candida albicans (strain SC5314 / ATCC MYA-2876) (Yeast), this protein is Cell-surface associated glycoprotein DFI1.